We begin with the raw amino-acid sequence, 63 residues long: Large ribosomal subunit protein uL29 (63 aa).

The protein belongs to the universal ribosomal protein uL29 family.

The protein is Large ribosomal subunit protein uL29 of Edwardsiella ictaluri (strain 93-146).